We begin with the raw amino-acid sequence, 544 residues long: Chaperonin GroEL (544 aa).

Residues 30 to 33 (TLGP), K51, 87 to 91 (DGTTT), G415, 481 to 483 (DAL), and D497 contribute to the ATP site.

Belongs to the chaperonin (HSP60) family. As to quaternary structure, forms a cylinder of 14 subunits composed of two heptameric rings stacked back-to-back. Interacts with the co-chaperonin GroES.

It is found in the cytoplasm. It catalyses the reaction ATP + H2O + a folded polypeptide = ADP + phosphate + an unfolded polypeptide.. Its function is as follows. Together with its co-chaperonin GroES, plays an essential role in assisting protein folding. The GroEL-GroES system forms a nano-cage that allows encapsulation of the non-native substrate proteins and provides a physical environment optimized to promote and accelerate protein folding. The protein is Chaperonin GroEL of Chlamydia trachomatis serovar A (strain ATCC VR-571B / DSM 19440 / HAR-13).